Consider the following 554-residue polypeptide: Potassium-transporting ATPase potassium-binding subunit (554 aa).

Helical transmembrane passes span 3-23 (PVLA…LAHV), 60-80 (PAYL…LYLL), 131-151 (GLAV…VALV), 174-194 (VRVL…CGVI), 252-272 (LFEI…FGIM), 279-299 (GYAI…LMMW), 323-343 (FGIG…TGAV), 352-372 (GLGG…PGGV), 375-395 (GLYG…LMVG), 412-432 (FAAC…AAAM), 481-501 (LGLA…ALAG), and 522-542 (LFAG…YFPA).

This sequence belongs to the KdpA family. The system is composed of three essential subunits: KdpA, KdpB and KdpC.

It is found in the cell membrane. Its function is as follows. Part of the high-affinity ATP-driven potassium transport (or Kdp) system, which catalyzes the hydrolysis of ATP coupled with the electrogenic transport of potassium into the cytoplasm. This subunit binds the extracellular potassium ions and delivers the ions to the membrane domain of KdpB through an intramembrane tunnel. The protein is Potassium-transporting ATPase potassium-binding subunit of Streptomyces coelicolor (strain ATCC BAA-471 / A3(2) / M145).